We begin with the raw amino-acid sequence, 26 residues long: Dermaseptin-J4 (26 aa).

V26 is subject to Valine amide.

In terms of tissue distribution, expressed by the skin glands.

The protein resides in the secreted. Has antimicrobial activity. In Phasmahyla jandaia (Jandaia leaf frog), this protein is Dermaseptin-J4.